We begin with the raw amino-acid sequence, 288 residues long: Killer cell lectin-like receptor 2 (288 aa).

The Cytoplasmic portion of the chain corresponds to 1–45; sequence MSEQEVTYTTLRFHKSSGLQNPVRPEETQRPRDVGHRECSVPWKF. A helical; Signal-anchor for type II membrane protein transmembrane segment spans residues 46 to 66; sequence IVIVLGILCFLLLLTVAVLVI. Topologically, residues 67–288 are extracellular; that stretch reads HIFRDGQEKH…SALQRDEDES (222 aa). N-linked (GlcNAc...) asparagine glycans are attached at residues Asn94, Asn105, and Asn114. In terms of domain architecture, C-type lectin spans 144 to 263; sequence QVEGYWFCCG…THGCICEKRL (120 aa). Intrachain disulfides connect Cys151–Cys156, Cys169–Cys257, Cys173–Cys259, and Cys238–Cys251. N-linked (GlcNAc...) asparagine glycosylation occurs at Asn177.

Homodimer; disulfide-linked.

It localises to the membrane. Receptor on natural killer (NK) cells for class I MHC. In Mus musculus (Mouse), this protein is Killer cell lectin-like receptor 2 (Klra2).